The chain runs to 376 residues: Pre-mRNA-splicing factor cwf25 (376 aa).

The stretch at 25–60 forms a coiled coil; the sequence is KDEQAHKEEMKRVEQLRREIEEERQLLELHRLQEAA. 2 disordered regions span residues 153 to 211 and 258 to 289; these read LMEK…DRNN and RTSR…ITQR. Residues 154–167 are compositionally biased toward basic and acidic residues; it reads MEKRKYSLDSDRKS. Residues 168-178 are compositionally biased toward basic residues; sequence KERRHRDRHHR. The segment covering 179–199 has biased composition (basic and acidic residues); sequence SNQDRSRERSDNEQHSSDKRE. S266 and S268 each carry phosphoserine. Residues 286 to 334 are a coiled coil; the sequence is ITQRHTDIESRLQKMQDNAKELDESRRKKIELLEKKERDEEQFLEKERR.

The protein belongs to the CWC25 family. Belongs to the 40S cdc5-associated complex (or cwf complex), a spliceosome sub-complex reminiscent of a late-stage spliceosome composed of the U2, U5 and U6 snRNAs and at least brr2, cdc5, cwf2/prp3, cwf3/syf1, cwf4/syf3, cwf5/ecm2, spp42/cwf6, cwf7/spf27, cwf8, cwf9, cwf10, cwf11, cwf12, prp45/cwf13, cwf14, cwf15, cwf16, cwf17, cwf18, cwf19, cwf20, cwf21, cwf22, cwf23, cwf24, cwf25, cwf26, cyp7/cwf27, cwf28, cwf29/ist3, lea1, msl1, prp5/cwf1, prp10, prp12/sap130, prp17, prp22, sap61, sap62, sap114, sap145, slu7, smb1, smd1, smd3, smf1, smg1 and syf2.

Its subcellular location is the nucleus. Its function is as follows. Involved in mRNA splicing. This is Pre-mRNA-splicing factor cwf25 (cwf25) from Schizosaccharomyces pombe (strain 972 / ATCC 24843) (Fission yeast).